The chain runs to 42 residues: Crotamine Ile-19 (42 aa).

3 disulfide bridges follow: Cys4–Cys36, Cys11–Cys30, and Cys18–Cys37.

Belongs to the crotamine-myotoxin family. Monomer. In terms of tissue distribution, expressed by the venom gland.

The protein localises to the secreted. In terms of biological role, cationic peptide that possesses multiple functions. It acts as a cell-penetrating peptide (CPP), and as a potent voltage-gated potassium channel (Kv) inhibitor, it induces severe muscle necrosis by a non-enzymatic mechanism and exhibits antimicrobial activities. It also elicits a short-lasting hyperextension of the hind limb. It does not cause observable tissue damage (whereas the whole venom causes severe myonecrosis accompanied by edema and hemorrhage). In Crotalus durissus ruruima (South American rattlesnake), this protein is Crotamine Ile-19.